The following is a 1807-amino-acid chain: Vitellogenin-2 (1807 aa).

The signal sequence occupies residues 1 to 16 (MWFPVTLLFLAGVAVA). A Vitellogenin domain is found at 24–819 (WETGNEYQYS…LIPKYVYVGV (796 aa)). Cys-180 and Cys-224 are joined by a disulfide. Positions 334–402 (SDSDNRRVRH…SSSSSSEEEN (69 aa)) are disordered. Positions 346–397 (VSQNSEQENSSESSKSSSQSSSSSSSASSSSSSSSSSSSSSSSSSSSSSSSS) are enriched in low complexity. N-linked (GlcNAc...) asparagine glycosylation is found at Asn-354, Asn-579, Asn-635, Asn-1181, Asn-1304, Asn-1373, and Asn-1506. A VWFD domain is found at 1448-1636 (QSCTLDKDKV…TYAMTQENCQ (189 aa)). 2 cysteine pairs are disulfide-bonded: Cys-1450–Cys-1599 and Cys-1472–Cys-1635. 2 disordered regions span residues 1635–1655 (CQGP…HEFP) and 1684–1723 (NRNK…KKHN). Residue Asn-1693 is glycosylated (N-linked (GlcNAc...) asparagine). Residues 1700–1714 (KKQYQANSQESGSSE) are compositionally biased toward polar residues.

The protein resides in the secreted. Precursor of the egg-yolk proteins that are sources of nutrients during embryonic development. This chain is Vitellogenin-2, found in Solenopsis invicta (Red imported fire ant).